The following is a 288-amino-acid chain: UDP-3-O-acyl-N-acetylglucosamine deacetylase (288 aa).

3 residues coordinate Zn(2+): His79, His236, and Asp240. Residue His263 is the Proton donor of the active site.

The protein belongs to the LpxC family. It depends on Zn(2+) as a cofactor.

It catalyses the reaction a UDP-3-O-[(3R)-3-hydroxyacyl]-N-acetyl-alpha-D-glucosamine + H2O = a UDP-3-O-[(3R)-3-hydroxyacyl]-alpha-D-glucosamine + acetate. It functions in the pathway glycolipid biosynthesis; lipid IV(A) biosynthesis; lipid IV(A) from (3R)-3-hydroxytetradecanoyl-[acyl-carrier-protein] and UDP-N-acetyl-alpha-D-glucosamine: step 2/6. Its function is as follows. Catalyzes the hydrolysis of UDP-3-O-myristoyl-N-acetylglucosamine to form UDP-3-O-myristoylglucosamine and acetate, the committed step in lipid A biosynthesis. The polypeptide is UDP-3-O-acyl-N-acetylglucosamine deacetylase (Rickettsia conorii (strain ATCC VR-613 / Malish 7)).